Consider the following 138-residue polypeptide: Acidic phospholipase A2 VP7 (138 aa).

A signal peptide spans 1–16 (MRTLWIVAVCLMGVEG). 7 disulfides stabilise this stretch: C42–C131, C44–C60, C59–C111, C65–C138, C66–C104, C73–C97, and C91–C102. Ca(2+) is bound by residues Y43, G45, and G47. H63 is an active-site residue. D64 is a Ca(2+) binding site. Residue D105 is part of the active site.

This sequence belongs to the phospholipase A2 family. Group II subfamily. D49 sub-subfamily. As to quaternary structure, does not form a complex. The cofactor is Ca(2+). As to expression, expressed by the venom gland.

It localises to the secreted. The enzyme catalyses a 1,2-diacyl-sn-glycero-3-phosphocholine + H2O = a 1-acyl-sn-glycero-3-phosphocholine + a fatty acid + H(+). Functionally, snake venom phospholipase A2 (PLA2) that is not toxic by itself, but the synergistical mixture of a basic and this acidic protein is lethal. PLA2 catalyzes the calcium-dependent hydrolysis of the 2-acyl groups in 3-sn-phosphoglycerides. The sequence is that of Acidic phospholipase A2 VP7 from Daboia palaestinae (Palestine viper).